The following is a 126-amino-acid chain: Histone H2B type 2-E (126 aa).

Low complexity predominate over residues 1–12 (MPEPAKSAPAPK). The tract at residues 1-32 (MPEPAKSAPAPKKGSKKAVTKAQKKDGKKRKR) is disordered. N-acetylproline is present on P2. E3 bears the ADP-ribosyl glutamic acid mark. N6-(2-hydroxyisobutyryl)lysine; alternate is present on K6. The residue at position 6 (K6) is an N6-(beta-hydroxybutyryl)lysine; alternate. At K6 the chain carries N6-acetyllysine; alternate. At K6 the chain carries N6-butyryllysine; alternate. An N6-crotonyllysine; alternate modification is found at K6. K6 carries the post-translational modification N6-lactoyllysine; alternate. K6 is covalently cross-linked (Glycyl lysine isopeptide (Lys-Gly) (interchain with G-Cter in SUMO2); alternate). Position 7 is an ADP-ribosylserine (S7). An N6-(beta-hydroxybutyryl)lysine; alternate modification is found at K12. An N6-acetyllysine; alternate mark is found at K12 and K13. An N6-crotonyllysine; alternate mark is found at K12 and K13. Residue K12 is modified to N6-lactoyllysine; alternate. K13 carries the post-translational modification N6-(2-hydroxyisobutyryl)lysine; alternate. Phosphoserine; by STK4/MST1 is present on S15. Residues K16, K17, K21, and K24 each carry the N6-acetyllysine; alternate modification. N6-crotonyllysine; alternate is present on residues K16, K17, K21, and K24. 4 positions are modified to N6-lactoyllysine; alternate: K16, K17, K21, and K24. Position 17 is an N6-glutaryllysine; alternate (K17). An N6-(2-hydroxyisobutyryl)lysine; alternate mark is found at K21 and K24. Residue K21 is modified to N6-(beta-hydroxybutyryl)lysine; alternate. The residue at position 21 (K21) is an N6-butyryllysine; alternate. A Glycyl lysine isopeptide (Lys-Gly) (interchain with G-Cter in SUMO2); alternate cross-link involves residue K21. K25 carries the post-translational modification N6-(2-hydroxyisobutyryl)lysine. N6-(2-hydroxyisobutyryl)lysine; alternate is present on K35. An N6-(beta-hydroxybutyryl)lysine; alternate modification is found at K35. Position 35 is an N6-crotonyllysine; alternate (K35). Position 35 is an N6-glutaryllysine; alternate (K35). The residue at position 35 (K35) is an N6-succinyllysine; alternate. K35 participates in a covalent cross-link: Glycyl lysine isopeptide (Lys-Gly) (interchain with G-Cter in ubiquitin); alternate. At E36 the chain carries PolyADP-ribosyl glutamic acid. The residue at position 37 (S37) is a Phosphoserine; by AMPK. Residues K44, K47, and K58 each carry the N6-(2-hydroxyisobutyryl)lysine; alternate modification. N6-lactoyllysine; alternate is present on K44. K44 and K47 each carry N6-glutaryllysine; alternate. N6-methyllysine; alternate is present on K47. N6,N6-dimethyllysine; alternate is present on K58. R80 is subject to Dimethylated arginine. K86 carries the post-translational modification N6-(2-hydroxyisobutyryl)lysine; alternate. K86 carries the N6-acetyllysine; alternate modification. K86 carries the post-translational modification N6-lactoyllysine; alternate. The residue at position 86 (K86) is an N6,N6,N6-trimethyllysine; alternate. An omega-N-methylarginine mark is found at R87 and R93. K109 carries the post-translational modification N6-(2-hydroxyisobutyryl)lysine; alternate. Residue K109 is modified to N6-lactoyllysine; alternate. K109 is subject to N6-glutaryllysine; alternate. K109 carries the post-translational modification N6-methyllysine; alternate. The O-linked (GlcNAc) serine glycan is linked to S113. Position 116 is a phosphothreonine (T116). K117 and K121 each carry N6-(2-hydroxyisobutyryl)lysine; alternate. At K117 the chain carries N6-(beta-hydroxybutyryl)lysine; alternate. K117 and K121 each carry N6-lactoyllysine; alternate. K117 and K121 each carry N6-glutaryllysine; alternate. K117 and K121 each carry N6-succinyllysine; alternate. N6-methylated lysine; alternate is present on K117. K121 participates in a covalent cross-link: Glycyl lysine isopeptide (Lys-Gly) (interchain with G-Cter in ubiquitin); alternate.

It belongs to the histone H2B family. As to quaternary structure, the nucleosome is a histone octamer containing two molecules each of H2A, H2B, H3 and H4 assembled in one H3-H4 heterotetramer and two H2A-H2B heterodimers. The octamer wraps approximately 147 bp of DNA. Monoubiquitination at Lys-35 (H2BK34Ub) by the MSL1/MSL2 dimer is required for histone H3 'Lys-4' (H3K4me) and 'Lys-79' (H3K79me) methylation and transcription activation at specific gene loci, such as HOXA9 and MEIS1 loci. Similarly, monoubiquitination at Lys-121 (H2BK120Ub) by the RNF20/40 complex gives a specific tag for epigenetic transcriptional activation and is also prerequisite for histone H3 'Lys-4' and 'Lys-79' methylation. It also functions cooperatively with the FACT dimer to stimulate elongation by RNA polymerase II. H2BK120Ub also acts as a regulator of mRNA splicing: deubiquitination by USP49 is required for efficient cotranscriptional splicing of a large set of exons. Post-translationally, phosphorylated on Ser-15 (H2BS14ph) by STK4/MST1 during apoptosis; which facilitates apoptotic chromatin condensation. Also phosphorylated on Ser-15 in response to DNA double strand breaks (DSBs), and in correlation with somatic hypermutation and immunoglobulin class-switch recombination. Phosphorylation at Ser-37 (H2BS36ph) by AMPK in response to stress promotes transcription. In terms of processing, ADP-ribosylated by PARP1 or PARP2 on Ser-7 (H2BS6ADPr) in response to DNA damage. H2BS6ADPr promotes recruitment of CHD1L. Mono-ADP-ribosylated on Glu-3 (H2BE2ADPr) by PARP3 in response to single-strand breaks. Poly ADP-ribosylation on Glu-36 (H2BE35ADPr) by PARP1 regulates adipogenesis: it inhibits phosphorylation at Ser-37 (H2BS36ph), thereby blocking expression of pro-adipogenetic genes. Crotonylation (Kcr) is specifically present in male germ cells and marks testis-specific genes in post-meiotic cells, including X-linked genes that escape sex chromosome inactivation in haploid cells. Crotonylation marks active promoters and enhancers and confers resistance to transcriptional repressors. It is also associated with post-meiotically activated genes on autosomes. Post-translationally, glcNAcylation at Ser-113 promotes monoubiquitination of Lys-121. It fluctuates in response to extracellular glucose, and associates with transcribed genes. In terms of processing, lactylated in macrophages by EP300/P300 by using lactoyl-CoA directly derived from endogenous or exogenous lactate, leading to stimulates gene transcription.

The protein resides in the nucleus. The protein localises to the chromosome. Functionally, core component of nucleosome. Nucleosomes wrap and compact DNA into chromatin, limiting DNA accessibility to the cellular machineries which require DNA as a template. Histones thereby play a central role in transcription regulation, DNA repair, DNA replication and chromosomal stability. DNA accessibility is regulated via a complex set of post-translational modifications of histones, also called histone code, and nucleosome remodeling. Its function is as follows. Has broad antibacterial activity. May contribute to the formation of the functional antimicrobial barrier of the colonic epithelium, and to the bactericidal activity of amniotic fluid. The sequence is that of Histone H2B type 2-E from Pongo abelii (Sumatran orangutan).